The following is a 527-amino-acid chain: Probable protein kinase UbiB (527 aa).

Residues Asp118–Gly501 form the Protein kinase domain. ATP is bound by residues Val124–Val132 and Lys150. Residue Asp285 is the Proton acceptor of the active site. A helical transmembrane segment spans residues Leu502–Ile522.

Belongs to the ABC1 family. UbiB subfamily.

The protein localises to the cell inner membrane. It participates in cofactor biosynthesis; ubiquinone biosynthesis [regulation]. In terms of biological role, is probably a protein kinase regulator of UbiI activity which is involved in aerobic coenzyme Q (ubiquinone) biosynthesis. The polypeptide is Probable protein kinase UbiB (Paraburkholderia phymatum (strain DSM 17167 / CIP 108236 / LMG 21445 / STM815) (Burkholderia phymatum)).